The chain runs to 157 residues: Putative pre-16S rRNA nuclease (157 aa).

The protein belongs to the YqgF nuclease family.

The protein localises to the cytoplasm. Functionally, could be a nuclease involved in processing of the 5'-end of pre-16S rRNA. In Nitrosomonas eutropha (strain DSM 101675 / C91 / Nm57), this protein is Putative pre-16S rRNA nuclease.